Reading from the N-terminus, the 905-residue chain is Alanine--tRNA ligase (905 aa).

Residues His582, His586, Cys687, and His691 each contribute to the Zn(2+) site.

Belongs to the class-II aminoacyl-tRNA synthetase family. It depends on Zn(2+) as a cofactor.

Its subcellular location is the cytoplasm. The enzyme catalyses tRNA(Ala) + L-alanine + ATP = L-alanyl-tRNA(Ala) + AMP + diphosphate. Functionally, catalyzes the attachment of alanine to tRNA(Ala) in a two-step reaction: alanine is first activated by ATP to form Ala-AMP and then transferred to the acceptor end of tRNA(Ala). Also edits incorrectly charged Ser-tRNA(Ala) and Gly-tRNA(Ala) via its editing domain. This is Alanine--tRNA ligase from Mycoplasma mobile (strain ATCC 43663 / 163K / NCTC 11711) (Mesomycoplasma mobile).